The sequence spans 960 residues: Testis anion transporter 1 (960 aa).

Topologically, residues 1–93 (MQPDRSFQSF…YRFKDWLLGD (93 aa)) are cytoplasmic. A helical membrane pass occupies residues 94–114 (LLAGISVGLVQIPQVLMLGLL). Residues 115-117 (ARH) are Extracellular-facing. A helical transmembrane segment spans residues 118–138 (LIPPLNVSYAAFCASVIYGIF). Position 139 (glycine 139) is a topological domain, cytoplasmic. A helical transmembrane segment spans residues 140-160 (SCHQMSIGTFFLVSALAINVL). At 161–201 (RTQPFNRGHLLLGTFIQADFSNTSFYENYNRSLSSVASVTL) the chain is on the extracellular side. N-linked (GlcNAc...) asparagine glycosylation is present at asparagine 190. 2 helical membrane passes run 202 to 222 (LTGI…VAYI) and 223 to 243 (PEAA…LSQL). At 244-268 (TCIFGIMISYNSGPIAFFYNIINYC) the chain is on the cytoplasmic side. Residues 269–289 (LGLPKANSTSILLFLTAMVAL) traverse the membrane as a helical segment. Topologically, residues 290–353 (RINKCIRISF…PVTPDMSNLT (64 aa)) are extracellular. Residues 354–374 (EVLIESFSLALVSSSLLVFLG) traverse the membrane as a helical segment. Over 375-390 (KKIASFHNYDVNSNQD) the chain is Cytoplasmic. The helical transmembrane segment at 391 to 411 (LIAIGLCNVVSSFFRSYVFTG) threads the bilayer. Over 412-427 (AVARTIIQDKTGGRQQ) the chain is Extracellular. The chain crosses the membrane as a helical span at residues 428–448 (FASLVGAGIMLLLMMKMARFF). The Cytoplasmic portion of the chain corresponds to 449–453 (YRLPN). The helical transmembrane segment at 454 to 474 (AIVAGIILSNVLPYLEAVYTL) threads the bilayer. Topologically, residues 475-494 (PSLWRQNQYDCLIWMVTFMS) are extracellular. A helical transmembrane segment spans residues 495-515 (AILLGLDIGLVVAVTFAFFII). Residues 516–960 (TVQSHRTKIL…ADTSEDALEI (445 aa)) are Cytoplasmic-facing. One can recognise an STAS domain in the interval 541–792 (DYREVANIPG…LTLHDAVLFA (252 aa)). The tract at residues 662–957 (ITSSSSQRNP…TSKADTSEDA (296 aa)) is interaction with RACGAP1. Disordered stretches follow at residues 807–857 (ESET…EESD) and 881–960 (EVEP…ALEI). The segment covering 818–827 (ETDKKEESRH) has biased composition (basic and acidic residues). Residues 884-904 (PESELEPESELDQETELEPEP) show a composition bias toward acidic residues. Residues 926–935 (SPTQTQARTQ) are compositionally biased toward polar residues.

This sequence belongs to the SLC26A/SulP transporter (TC 2.A.53) family. In terms of assembly, interacts with RACGAP1. Interacts with CFTR; stimulates anion transport activity of CFTR. In terms of processing, N-glycosylated.

The protein localises to the membrane. It carries out the reaction sulfate(out) + chloride(in) = sulfate(in) + chloride(out). The catalysed reaction is oxalate(in) + chloride(out) = oxalate(out) + chloride(in). Its function is as follows. Antiporter that mediates the exchange of sulfate and oxalate against chloride ions across a membrane. Stimulates anion transport activity of CFTR. May cooperate with CFTR in the regulation of chloride and bicarbonate ions fluxes required for activation of the ADCY10/PKA pathway during sperm motility and sperm capacitation. May play a role in sperm tail differentiation and motility and hence male fertility. The chain is Testis anion transporter 1 from Bos taurus (Bovine).